Consider the following 793-residue polypeptide: Putative dipeptidyl aminopeptidase C2E11.08 (793 aa).

Over 1–24 the chain is Cytoplasmic; it reads MNDFSFEDKGLISRSGFGSRHVRR. Residues 25 to 45 form a helical; Signal-anchor for type II membrane protein membrane-spanning segment; it reads VVKALALIFSLLILYLTISNV. Topologically, residues 46–793 are lumenal; the sequence is SDSPPKRDSL…STGVRQHRWD (748 aa). N101, N136, N246, N299, N303, N324, N336, N377, N384, N407, and N535 each carry an N-linked (GlcNAc...) asparagine glycan. Catalysis depends on charge relay system residues S647, D722, and H755. Residue N761 is glycosylated (N-linked (GlcNAc...) asparagine).

Belongs to the peptidase S9B family.

Its subcellular location is the vacuole membrane. This chain is Putative dipeptidyl aminopeptidase C2E11.08, found in Schizosaccharomyces pombe (strain 972 / ATCC 24843) (Fission yeast).